Consider the following 434-residue polypeptide: AT-rich interactive domain-containing protein 5 (434 aa).

Positions methionine 1 to valine 120 are disordered. 3 stretches are compositionally biased toward basic and acidic residues: residues glutamate 25–lysine 37, aspartate 43–leucine 54, and arginine 78–threonine 90. Over residues aspartate 92–glutamate 102 the composition is skewed to polar residues. The ARID domain occupies proline 142–arginine 233. The disordered stretch occupies residues glutamate 237–alanine 274. Positions alanine 336–glutamine 434 constitute a sHSP domain.

This sequence belongs to the small heat shock protein (HSP20) family.

The protein resides in the nucleus. This Arabidopsis thaliana (Mouse-ear cress) protein is AT-rich interactive domain-containing protein 5 (ARID5).